The following is a 306-amino-acid chain: Methylated RNA-binding protein 1 (306 aa).

The YTH domain maps to 155–290 (SRFFVIKSSS…SIGISIINLF (136 aa)). Residues 161-163 (KSS), Asn-207, and Trp-231 contribute to the RNA site.

RNA-binding protein that acts as a post-transcriptional regulator of phosphate metabolism by binding to the 3'-UTR region of PHO4 mRNA, decreasing its stability. Acts by recognizing and binding N6-methyladenosine (m6A)-containing RNAs, a modification present at internal sites of mRNAs and some non-coding RNAs. The protein is Methylated RNA-binding protein 1 of Saccharomyces cerevisiae (strain ATCC 204508 / S288c) (Baker's yeast).